The chain runs to 311 residues: MGVTAVLMLPLLLLGISGLLFIYQEVSRLWSKSVVQNKVVVITDAISGLGKECARVFHTGGARLVLCGKNWERLQSLYDALISVADPSKTFTPKLVLLDLSDISCVQDVAKEVLDCYGCVDILINNASVKVKGPAHKISLELDKKIMDANYFGPIILTKALLPDMISRRTGQIVLVNNIQGKLGIPFRTAYAASKHAALGFFDCLRAEVEEYDVVVSTVSPTFIRSYHVDPGQGNWEASIWKFFFRKLTYGTHPVDVAEEVMRTVRRKKQEVFLANPIPKAAVYIRTLFPELFFAVVACGVKEKLSVPEEG.

An N-terminal signal peptide occupies residues 1–18 (MGVTAVLMLPLLLLGISG). NAD(+)-binding residues include Ser47, Leu49, Tyr191, Lys195, and Ser226. Tyr191 acts as the Proton acceptor in catalysis.

This sequence belongs to the short-chain dehydrogenases/reductases (SDR) family.

It is found in the sarcoplasmic reticulum membrane. The enzyme catalyses all-trans-retinol + NAD(+) = all-trans-retinal + NADH + H(+). In terms of biological role, NADH-dependent oxidoreductase which catalyzes the oxidation of all-trans-retinol to all-trans-retinal. Plays a role in the regulation of cardiac and skeletal muscle metabolic functions. Maintains Ca(2+) intracellular homeostasis by repressing Ca(2+) release from the sarcoplasmic reticulum (SR) in myotubes, possibly through local alternations in NAD/NADH or retinol/retinal. Also plays a role in Ca(2+) homeostasis by controlling Ca(2+) overload in the cytosol and the SR in myotubes. Involved in glucose uptake into skeletal muscles and muscle performance by activating PI3K and mTORC2-mediated AKT1 phosphorylation signaling pathways, possibly through the action of its downstream catalytic product all-trans-retinoic acid. In Bos taurus (Bovine), this protein is Dehydrogenase/reductase SDR family member 7C (DHRS7C).